We begin with the raw amino-acid sequence, 162 residues long: EF-hand calcium-binding domain-containing protein 11 (162 aa).

EF-hand domains follow at residues 18–53 (SERR…LFGY), 91–126 (LYRN…VAPK), and 127–162 (LPAR…GQSK). Residues D140, D142, D144, H146, and D151 each contribute to the Ca(2+) site.

This Mus musculus (Mouse) protein is EF-hand calcium-binding domain-containing protein 11 (Efcab11).